The primary structure comprises 310 residues: tRNA dimethylallyltransferase (310 aa).

14–21 is a binding site for ATP; that stretch reads GPTASGKS. 16–21 is a binding site for substrate; that stretch reads TASGKS. 2 interaction with substrate tRNA regions span residues 39-42 and 163-167; these read DSMQ and QRIVR.

Belongs to the IPP transferase family. As to quaternary structure, monomer. Requires Mg(2+) as cofactor.

It catalyses the reaction adenosine(37) in tRNA + dimethylallyl diphosphate = N(6)-dimethylallyladenosine(37) in tRNA + diphosphate. Catalyzes the transfer of a dimethylallyl group onto the adenine at position 37 in tRNAs that read codons beginning with uridine, leading to the formation of N6-(dimethylallyl)adenosine (i(6)A). In Brucella melitensis biotype 2 (strain ATCC 23457), this protein is tRNA dimethylallyltransferase.